The chain runs to 103 residues: Small ribosomal subunit protein uS10 (103 aa).

The protein belongs to the universal ribosomal protein uS10 family. As to quaternary structure, part of the 30S ribosomal subunit.

Functionally, involved in the binding of tRNA to the ribosomes. The chain is Small ribosomal subunit protein uS10 from Azotobacter vinelandii (strain DJ / ATCC BAA-1303).